The following is a 473-amino-acid chain: Glycosyl hydrolase family 109 protein 2 (473 aa).

The tat-type signal signal peptide spans 1–31 (MSIFSSRRQFLKSLGLAAGAAAAGNALPGKA). Residues 77 to 78 (GR), aspartate 99, 148 to 151 (WSSH), 168 to 169 (EV), and asparagine 197 contribute to the NAD(+) site. Substrate is bound by residues tyrosine 226, arginine 244, 256–259 (YPTH), and tyrosine 339. Tyrosine 256 contacts NAD(+).

Belongs to the Gfo/Idh/MocA family. Glycosyl hydrolase 109 subfamily. It depends on NAD(+) as a cofactor. Post-translationally, predicted to be exported by the Tat system. The position of the signal peptide cleavage has not been experimentally proven.

Its function is as follows. Glycosidase. This is Glycosyl hydrolase family 109 protein 2 from Akkermansia muciniphila (strain ATCC BAA-835 / DSM 22959 / JCM 33894 / BCRC 81048 / CCUG 64013 / CIP 107961 / Muc).